Reading from the N-terminus, the 130-residue chain is MKKKHKRLLITSGIFCFLSCAVFFILTTLKENISFFYTVSEAIVLPNNQKPIRVGGMIVENSVIRSESEVIFQMTDFNKSVMVKYQGILPPMFSEKSGVVVQGKMFDNGTFLADTVFAKHDENYKPKVLK.

Topologically, residues M1–R7 are cytoplasmic. A helical; Signal-anchor for type II membrane protein transmembrane segment spans residues L8–T28. Topologically, residues L29 to K130 are extracellular. Heme contacts are provided by H120 and Y124.

This sequence belongs to the CcmE/CycJ family.

It localises to the cell membrane. Its function is as follows. Heme chaperone required for the biogenesis of c-type cytochromes. Transiently binds heme delivered by CcmC and transfers the heme to apo-cytochromes in a process facilitated by CcmF and CcmH. The chain is Cytochrome c-type biogenesis protein CcmE from Wolbachia pipientis subsp. Culex pipiens (strain wPip).